We begin with the raw amino-acid sequence, 141 residues long: Large ribosomal subunit protein uL23B (141 aa).

Residues 1–22 (MSVGKAKGAQKTVQKGIHNKVA) are disordered.

This sequence belongs to the universal ribosomal protein uL23 family. As to quaternary structure, component of the large ribosomal subunit (LSU). Mature yeast ribosomes consist of a small (40S) and a large (60S) subunit. The 40S small subunit contains 1 molecule of ribosomal RNA (18S rRNA) and at least 33 different proteins. The large 60S subunit contains 3 rRNA molecules (25S, 5.8S and 5S rRNA) and at least 46 different proteins. uL23 is associated with the polypeptide exit tunnel.

The protein resides in the cytoplasm. Its function is as follows. This protein binds to a specific region on the 26S rRNA. Functionally, component of the ribosome, a large ribonucleoprotein complex responsible for the synthesis of proteins in the cell. The small ribosomal subunit (SSU) binds messenger RNAs (mRNAs) and translates the encoded message by selecting cognate aminoacyl-transfer RNA (tRNA) molecules. The large subunit (LSU) contains the ribosomal catalytic site termed the peptidyl transferase center (PTC), which catalyzes the formation of peptide bonds, thereby polymerizing the amino acids delivered by tRNAs into a polypeptide chain. The nascent polypeptides leave the ribosome through a tunnel in the LSU and interact with protein factors that function in enzymatic processing, targeting, and the membrane insertion of nascent chains at the exit of the ribosomal tunnel. uL23 is a major component of the universal docking site for these factors at the polypeptide exit tunnel. In Schizosaccharomyces pombe (strain 972 / ATCC 24843) (Fission yeast), this protein is Large ribosomal subunit protein uL23B (rpl2502).